The following is a 273-amino-acid chain: 2,3,4,5-tetrahydropyridine-2,6-dicarboxylate N-succinyltransferase (273 aa).

Positions 106 and 143 each coordinate substrate.

It belongs to the transferase hexapeptide repeat family. Homotrimer.

It is found in the cytoplasm. It carries out the reaction (S)-2,3,4,5-tetrahydrodipicolinate + succinyl-CoA + H2O = (S)-2-succinylamino-6-oxoheptanedioate + CoA. Its pathway is amino-acid biosynthesis; L-lysine biosynthesis via DAP pathway; LL-2,6-diaminopimelate from (S)-tetrahydrodipicolinate (succinylase route): step 1/3. The chain is 2,3,4,5-tetrahydropyridine-2,6-dicarboxylate N-succinyltransferase from Wolbachia pipientis wMel.